Reading from the N-terminus, the 453-residue chain is Putative sodium-coupled neutral amino acid transporter 11 (453 aa).

The interval 1–34 (MSYQQPQLRGPLQRETDPSDRESLVSGHEHGGKS) is disordered. The span at 12-32 (LQRETDPSDRESLVSGHEHGG) shows a compositional bias: basic and acidic residues. 11 consecutive transmembrane segments (helical) span residues 39–59 (AVFNVVNSVIGSGIIGLPYSM), 66–86 (LGILLLFWVSYITDFSLVLLI), 106–126 (GFPGYLLLSTLQFMYPFIAMI), 152–172 (FISRHFIIVVSTVTCTLPLSL), 179–199 (LGKISFISTILTAVILGVVVT), 222–242 (AIQAIGVMSFAFICHHNCFLV), 262–282 (ILVSVFICVLFATCGYFTFTG), 299–319 (VTFGRFCYGITVILTYPIECF), 337–357 (VFHVTLTAAIVTAATLISLLI), 359–379 (CLGIVLELNGVLCAAPLIFII), and 399–419 (MACVMFPVGAVVMVAGFVMAI).

It belongs to the amino acid/polyamine transporter 2 family. As to expression, widely expressed.

Its subcellular location is the membrane. In terms of biological role, putative sodium-dependent amino acid/proton antiporter. The protein is Putative sodium-coupled neutral amino acid transporter 11 (Slc38a11) of Rattus norvegicus (Rat).